The primary structure comprises 411 residues: Meiotically up-regulated gene 147 protein (411 aa).

Disordered regions lie at residues 1-52 (MLAQ…FENK), 102-137 (EREE…ELAD), and 156-191 (HQHE…HYES). Residues 33–43 (TQNESNLQQSE) show a composition bias toward polar residues. Positions 156 to 172 (HQHEDEFSSSNKDKGFT) are enriched in basic and acidic residues.

The protein resides in the cytoplasm. It localises to the nucleus. In terms of biological role, has a role in meiosis. The chain is Meiotically up-regulated gene 147 protein (mug147) from Schizosaccharomyces pombe (strain 972 / ATCC 24843) (Fission yeast).